The primary structure comprises 160 residues: Major allergen Pru av 1 (160 aa).

This sequence belongs to the BetVI family.

In Prunus avium (Cherry), this protein is Major allergen Pru av 1 (PRUA1).